Reading from the N-terminus, the 390-residue chain is Elongation factor Ts, mitochondrial (390 aa).

Belongs to the EF-Ts family.

It localises to the mitochondrion. Associates with the EF-Tu.GDP complex and induces the exchange of GDP to GTP. It remains bound to the aminoacyl-tRNA.EF-Tu.GTP complex up to the GTP hydrolysis stage on the ribosome. This chain is Elongation factor Ts, mitochondrial, found in Plasmodium vivax (strain Salvador I).